We begin with the raw amino-acid sequence, 70 residues long: Small ribosomal subunit protein bS21 (70 aa).

The protein belongs to the bacterial ribosomal protein bS21 family.

The chain is Small ribosomal subunit protein bS21 from Chromobacterium violaceum (strain ATCC 12472 / DSM 30191 / JCM 1249 / CCUG 213 / NBRC 12614 / NCIMB 9131 / NCTC 9757 / MK).